We begin with the raw amino-acid sequence, 311 residues long: GTP cyclohydrolase FolE2 (311 aa).

Belongs to the GTP cyclohydrolase IV family.

The catalysed reaction is GTP + H2O = 7,8-dihydroneopterin 3'-triphosphate + formate + H(+). It participates in cofactor biosynthesis; 7,8-dihydroneopterin triphosphate biosynthesis; 7,8-dihydroneopterin triphosphate from GTP: step 1/1. Its function is as follows. Converts GTP to 7,8-dihydroneopterin triphosphate. This is GTP cyclohydrolase FolE2 from Hydrogenovibrio crunogenus (strain DSM 25203 / XCL-2) (Thiomicrospira crunogena).